The sequence spans 195 residues: Probable GTP-binding protein EngB (195 aa).

Residues 22–195 (GYPEIALVGR…WKWIEDRMGE (174 aa)) form the EngB-type G domain. GTP contacts are provided by residues 30–37 (GRSNVGKS), 57–61 (GKTQT), 75–78 (DVPG), 142–145 (TKSD), and 173–176 (MFSA). Ser-37 and Thr-59 together coordinate Mg(2+).

This sequence belongs to the TRAFAC class TrmE-Era-EngA-EngB-Septin-like GTPase superfamily. EngB GTPase family. The cofactor is Mg(2+).

Functionally, necessary for normal cell division and for the maintenance of normal septation. The polypeptide is Probable GTP-binding protein EngB (Pediococcus pentosaceus (strain ATCC 25745 / CCUG 21536 / LMG 10740 / 183-1w)).